Here is a 746-residue protein sequence, read N- to C-terminus: Protein O-mannosyl-transferase 1 (746 aa).

A run of 7 helical transmembrane segments spans residues 30-50 (PLVV…LGLL), 90-110 (FGHM…NFLW), 121-141 (VPIW…VPMA), 144-164 (IVLE…LMLI), 176-196 (LLES…LKFF), 228-248 (MGIF…WNLI), and 266-286 (IVAL…VHLM). MIR domains follow at residues 318 to 381 (PLEV…VKDP), 392 to 449 (PRPV…LDIV), and 453 to 513 (SNRD…VEEH). N-linked (GlcNAc...) asparagine glycosylation is found at N435, N471, and N539. 3 helical membrane passes run 597-617 (IVIW…FFWY), 636-656 (WVLA…PFFL), and 660-680 (VLFL…LPIV).

This sequence belongs to the glycosyltransferase 39 family.

Its subcellular location is the endoplasmic reticulum membrane. The enzyme catalyses a di-trans,poly-cis-dolichyl beta-D-mannosyl phosphate + L-seryl-[protein] = 3-O-(alpha-D-mannosyl)-L-seryl-[protein] + a di-trans,poly-cis-dolichyl phosphate + H(+). The catalysed reaction is a di-trans,poly-cis-dolichyl beta-D-mannosyl phosphate + L-threonyl-[protein] = 3-O-(alpha-D-mannosyl)-L-threonyl-[protein] + a di-trans,poly-cis-dolichyl phosphate + H(+). The protein operates within protein modification; protein glycosylation. Functionally, transfers mannosyl residues to the hydroxyl group of serine or threonine residues. Coexpression of both POMT1 and POMT2 is necessary for enzyme activity, expression of either POMT1 or POMT2 alone is insufficient. Essentially dedicated to O-mannosylation of alpha-DAG1 and few other proteins but not of cadherins and protocaherins. The sequence is that of Protein O-mannosyl-transferase 1 (Pomt1) from Mus musculus (Mouse).